We begin with the raw amino-acid sequence, 307 residues long: Elongation factor Ts (307 aa).

The involved in Mg(2+) ion dislocation from EF-Tu stretch occupies residues 82-85 (TDFV).

It belongs to the EF-Ts family.

The protein localises to the cytoplasm. In terms of biological role, associates with the EF-Tu.GDP complex and induces the exchange of GDP to GTP. It remains bound to the aminoacyl-tRNA.EF-Tu.GTP complex up to the GTP hydrolysis stage on the ribosome. The polypeptide is Elongation factor Ts (Nautilia profundicola (strain ATCC BAA-1463 / DSM 18972 / AmH)).